Here is a 293-residue protein sequence, read N- to C-terminus: uncharacterized protein (293 aa).

2 disordered regions span residues 1–23 and 52–83; these read MGWPPAQKPEDSKEEHGGPAQTD and ELQSYSHTSESPVETKTPTTSSEEQDEQSELS. Over residues 8-17 the composition is skewed to basic and acidic residues; it reads KPEDSKEEHG. The span at 52–71 shows a compositional bias: polar residues; the sequence is ELQSYSHTSESPVETKTPTT.

This is an uncharacterized protein from Mus musculus (Mouse).